We begin with the raw amino-acid sequence, 23 residues long: AAPKAPADGLKMDKTKQXVVFNH.

The disordered stretch occupies residues 1 to 23 (AAPKAPADGLKMDKTKQXVVFNH). His-23 is a heme binding site.

In terms of processing, binds 4 heme groups per subunit.

It localises to the periplasm. In terms of biological role, participates in sulfate respiration coupled with phosphorylation by transferring electrons from the enzyme dehydrogenase to ferredoxin. The chain is Cytochrome c3-1 from Nitratidesulfovibrio vulgaris (Desulfovibrio vulgaris).